We begin with the raw amino-acid sequence, 133 residues long: Small ribosomal subunit protein bS6 (133 aa).

It belongs to the bacterial ribosomal protein bS6 family.

Its function is as follows. Binds together with bS18 to 16S ribosomal RNA. This Chlorobium luteolum (strain DSM 273 / BCRC 81028 / 2530) (Pelodictyon luteolum) protein is Small ribosomal subunit protein bS6.